A 192-amino-acid polypeptide reads, in one-letter code: A-type ATP synthase subunit E (192 aa).

This sequence belongs to the V-ATPase E subunit family. As to quaternary structure, has multiple subunits with at least A(3), B(3), C, D, E, F, H, I and proteolipid K(x).

Its subcellular location is the cell membrane. In terms of biological role, component of the A-type ATP synthase that produces ATP from ADP in the presence of a proton gradient across the membrane. The sequence is that of A-type ATP synthase subunit E from Sulfolobus acidocaldarius (strain ATCC 33909 / DSM 639 / JCM 8929 / NBRC 15157 / NCIMB 11770).